A 758-amino-acid chain; its full sequence is Catalase-peroxidase (758 aa).

The segment covering 1-10 has biased composition (polar residues); sequence MSDTQDNAPA. The interval 1-59 is disordered; sequence MSDTQDNAPASAQGVDQKAAAGCPVAHDSVTAHGSESESPAIDSPTPHSGGRPRTNRDW. The tryptophyl-tyrosyl-methioninium (Trp-Tyr) (with M-276) cross-link spans 128–250; it reads WHAAGTYRID…VGATEMGLIY (123 aa). Histidine 129 acts as the Proton acceptor in catalysis. The tryptophyl-tyrosyl-methioninium (Tyr-Met) (with W-128) cross-link spans 250 to 276; it reads YVNPEGPRGNADPAAAAHFIRETFRRM. Histidine 291 is a heme b binding site.

This sequence belongs to the peroxidase family. Peroxidase/catalase subfamily. Homodimer or homotetramer. The cofactor is heme b. Post-translationally, formation of the three residue Trp-Tyr-Met cross-link is important for the catalase, but not the peroxidase activity of the enzyme.

The enzyme catalyses H2O2 + AH2 = A + 2 H2O. It carries out the reaction 2 H2O2 = O2 + 2 H2O. Bifunctional enzyme with both catalase and broad-spectrum peroxidase activity. This chain is Catalase-peroxidase, found in Salinispora arenicola (strain CNS-205).